Reading from the N-terminus, the 208-residue chain is Putative dioxygenase RC0543 (208 aa).

It belongs to the intradiol ring-cleavage dioxygenase family.

In Rickettsia conorii (strain ATCC VR-613 / Malish 7), this protein is Putative dioxygenase RC0543.